The following is a 261-amino-acid chain: Uridine-cytidine kinase 2 (261 aa).

Over residues 1–16 (MAGDSEQTLQNHQQPN) the composition is skewed to polar residues. Residues 1–24 (MAGDSEQTLQNHQQPNGGEPFLIG) form a disordered region. A2 is modified (N-acetylalanine). 27 to 35 (GGTASGKSS) provides a ligand contact to ATP. Residues D84, Y112, H117, R166, R176, and Q184 each contribute to the substrate site. D213 is a binding site for ATP. The segment at 236–261 (RQTNGCLNGYTPSRKRQASESSSRPH) is disordered. Phosphoserine is present on S254.

This sequence belongs to the uridine kinase family. As to quaternary structure, homotetramer. In terms of tissue distribution, according to PubMed:8812458; testis-specific. According to PubMed:11306702, placenta-specific.

It carries out the reaction uridine + ATP = UMP + ADP + H(+). The catalysed reaction is cytidine + ATP = CMP + ADP + H(+). The protein operates within pyrimidine metabolism; CTP biosynthesis via salvage pathway; CTP from cytidine: step 1/3. It functions in the pathway pyrimidine metabolism; UMP biosynthesis via salvage pathway; UMP from uridine: step 1/1. Its function is as follows. Phosphorylates uridine and cytidine to uridine monophosphate and cytidine monophosphate. Does not phosphorylate deoxyribonucleosides or purine ribonucleosides. Can use ATP or GTP as a phosphate donor. Can also phosphorylate cytidine and uridine nucleoside analogs such as 6-azauridine, 5-fluorouridine, 4-thiouridine, 5-bromouridine, N(4)-acetylcytidine, N(4)-benzoylcytidine, 5-fluorocytidine, 2-thiocytidine, 5-methylcytidine, and N(4)-anisoylcytidine. This is Uridine-cytidine kinase 2 (UCK2) from Homo sapiens (Human).